The chain runs to 209 residues: GTP cyclohydrolase-2 (209 aa).

GTP is bound at residue 49 to 53 (RIHSE). Zn(2+)-binding residues include C54, C65, and C67. GTP contacts are provided by residues Q70, 92 to 94 (EGR), and T114. The Proton acceptor role is filled by D126. The Nucleophile role is filled by R128. Residues T149 and K154 each coordinate GTP.

Belongs to the GTP cyclohydrolase II family. Zn(2+) is required as a cofactor.

The catalysed reaction is GTP + 4 H2O = 2,5-diamino-6-hydroxy-4-(5-phosphoribosylamino)-pyrimidine + formate + 2 phosphate + 3 H(+). The protein operates within cofactor biosynthesis; riboflavin biosynthesis; 5-amino-6-(D-ribitylamino)uracil from GTP: step 1/4. In terms of biological role, catalyzes the conversion of GTP to 2,5-diamino-6-ribosylamino-4(3H)-pyrimidinone 5'-phosphate (DARP), formate and pyrophosphate. The polypeptide is GTP cyclohydrolase-2 (Shewanella halifaxensis (strain HAW-EB4)).